A 62-amino-acid chain; its full sequence is Large ribosomal subunit protein bL32 (62 aa).

The span at 1-16 (MAVPKRKTSPMKRGFR) shows a compositional bias: basic residues. The interval 1–62 (MAVPKRKTSP…QILTPKNKEA (62 aa)) is disordered. The span at 28-44 (VEDKDSGELRRPHHVDL) shows a compositional bias: basic and acidic residues.

The protein belongs to the bacterial ribosomal protein bL32 family.

The polypeptide is Large ribosomal subunit protein bL32 (Methylocella silvestris (strain DSM 15510 / CIP 108128 / LMG 27833 / NCIMB 13906 / BL2)).